An 80-amino-acid chain; its full sequence is Exodeoxyribonuclease 7 small subunit (80 aa).

Belongs to the XseB family. Heterooligomer composed of large and small subunits.

Its subcellular location is the cytoplasm. It catalyses the reaction Exonucleolytic cleavage in either 5'- to 3'- or 3'- to 5'-direction to yield nucleoside 5'-phosphates.. In terms of biological role, bidirectionally degrades single-stranded DNA into large acid-insoluble oligonucleotides, which are then degraded further into small acid-soluble oligonucleotides. The chain is Exodeoxyribonuclease 7 small subunit from Halalkalibacterium halodurans (strain ATCC BAA-125 / DSM 18197 / FERM 7344 / JCM 9153 / C-125) (Bacillus halodurans).